The chain runs to 457 residues: tRNA-2-methylthio-N(6)-dimethylallyladenosine synthase (457 aa).

The 118-residue stretch at 3–120 folds into the MTTase N-terminal domain; the sequence is KKVYVKTFGC…LPQMIDKRRE (118 aa). [4Fe-4S] cluster is bound by residues cysteine 12, cysteine 49, cysteine 83, cysteine 157, cysteine 161, and cysteine 164. The 235-residue stretch at 143–377 folds into the Radical SAM core domain; the sequence is RVDGPSAFVS…QATIEENVQR (235 aa). A TRAM domain is found at 380 to 447; that stretch reads DSMVGKIERI…PHSLRGELVL (68 aa).

The protein belongs to the methylthiotransferase family. MiaB subfamily. In terms of assembly, monomer. Requires [4Fe-4S] cluster as cofactor.

The protein localises to the cytoplasm. It catalyses the reaction N(6)-dimethylallyladenosine(37) in tRNA + (sulfur carrier)-SH + AH2 + 2 S-adenosyl-L-methionine = 2-methylsulfanyl-N(6)-dimethylallyladenosine(37) in tRNA + (sulfur carrier)-H + 5'-deoxyadenosine + L-methionine + A + S-adenosyl-L-homocysteine + 2 H(+). Its function is as follows. Catalyzes the methylthiolation of N6-(dimethylallyl)adenosine (i(6)A), leading to the formation of 2-methylthio-N6-(dimethylallyl)adenosine (ms(2)i(6)A) at position 37 in tRNAs that read codons beginning with uridine. This Paraburkholderia phytofirmans (strain DSM 17436 / LMG 22146 / PsJN) (Burkholderia phytofirmans) protein is tRNA-2-methylthio-N(6)-dimethylallyladenosine synthase.